A 440-amino-acid chain; its full sequence is Chromosome partition protein MukF (440 aa).

A leucine-zipper region spans residues 208 to 236; the sequence is LSETSGTLRELQDTLEAAGDKLQANLLRI.

It belongs to the MukF family. In terms of assembly, interacts, and probably forms a ternary complex, with MukE and MukB via its C-terminal region. The complex formation is stimulated by calcium or magnesium. It is required for an interaction between MukE and MukB.

It localises to the cytoplasm. The protein localises to the nucleoid. Functionally, involved in chromosome condensation, segregation and cell cycle progression. May participate in facilitating chromosome segregation by condensation DNA from both sides of a centrally located replisome during cell division. Not required for mini-F plasmid partitioning. Probably acts via its interaction with MukB and MukE. Overexpression results in anucleate cells. It has a calcium binding activity. The polypeptide is Chromosome partition protein MukF (Yersinia pestis).